Here is a 445-residue protein sequence, read N- to C-terminus: Ribosomal protein uS12 methylthiotransferase RimO (445 aa).

The region spanning 10–120 (PKVGFVSLGC…VVNAVHEVVP (111 aa)) is the MTTase N-terminal domain. Positions 19, 55, 84, 153, 157, and 160 each coordinate [4Fe-4S] cluster. The 240-residue stretch at 139–378 (LTPRHYAYLK…AHQQAISSAR (240 aa)) folds into the Radical SAM core domain. The 66-residue stretch at 380–445 (QLRIGREIEV…DEYDLWAEQI (66 aa)) folds into the TRAM domain.

The protein belongs to the methylthiotransferase family. RimO subfamily. [4Fe-4S] cluster serves as cofactor.

It is found in the cytoplasm. The enzyme catalyses L-aspartate(89)-[ribosomal protein uS12]-hydrogen + (sulfur carrier)-SH + AH2 + 2 S-adenosyl-L-methionine = 3-methylsulfanyl-L-aspartate(89)-[ribosomal protein uS12]-hydrogen + (sulfur carrier)-H + 5'-deoxyadenosine + L-methionine + A + S-adenosyl-L-homocysteine + 2 H(+). Catalyzes the methylthiolation of an aspartic acid residue of ribosomal protein uS12. This is Ribosomal protein uS12 methylthiotransferase RimO from Pseudomonas fluorescens (strain Pf0-1).